A 743-amino-acid chain; its full sequence is Fork head transcription factor 1 (743 aa).

An FHA domain is found at 39–94 (VTMGRKASNSSDCDVHLGDTKAISRQHAKIFYSFPNQRFEISVMGKNGAFVDGEFV). 3 disordered regions span residues 214–291 (QPPK…ATQK), 411–450 (GISA…LQNG), and 529–743 (QMQG…SSYT). Residues 221–230 (VSPSSIQRLS) are compositionally biased toward polar residues. Residues 291–385 (KPNLSYANLI…EGNFFRRTKK (95 aa)) constitute a DNA-binding region (fork-head). Basic and acidic residues predominate over residues 434–443 (SRGENVEDRP). Low complexity predominate over residues 529–539 (QMQGPQQVQQQ). A compositionally biased stretch (polar residues) spans 562-576 (NITSPSPSISVTQRP). Over residues 614–624 (SAGPSSVRSSS) the composition is skewed to low complexity. 3 stretches are compositionally biased toward polar residues: residues 625–643 (YNST…QNLH), 670–686 (TGNQ…ASSF), and 695–726 (ENGS…NSSD).

It is found in the nucleus. In terms of biological role, acts as a transcriptional activator for ribosomal protein genes (RPG) that contain a HomolE UAS (upstream activating sequence) in addition to a HomolD promoter element; HomolD plays the role of a TATA box in RPG promoters that do not contain a canonical TATA sequence. Binds to HomolE elements with consensus sequence 3'-ACCCTACCCT-5' (or its inverted form AGGGTAGGGT). The chain is Fork head transcription factor 1 from Schizosaccharomyces pombe (strain 972 / ATCC 24843) (Fission yeast).